The chain runs to 350 residues: Arginine N-succinyltransferase (350 aa).

Leu-125 is a succinyl-CoA binding site. The active-site Proton donor is the His-229.

The protein belongs to the arginine N-succinyltransferase family.

It carries out the reaction succinyl-CoA + L-arginine = N(2)-succinyl-L-arginine + CoA + H(+). It participates in amino-acid degradation; L-arginine degradation via AST pathway; L-glutamate and succinate from L-arginine: step 1/5. In terms of biological role, catalyzes the transfer of succinyl-CoA to arginine to produce N(2)-succinylarginine. The chain is Arginine N-succinyltransferase from Yersinia pseudotuberculosis serotype IB (strain PB1/+).